We begin with the raw amino-acid sequence, 347 residues long: Globoside alpha-1,3-N-acetylgalactosaminyltransferase 1 (347 aa).

Residues 1-5 (MHRRR) are Cytoplasmic-facing. Residues 6–26 (LALGLGFCLLAGTSLSVLWVY) form a helical; Signal-anchor for type II membrane protein membrane-spanning segment. The Lumenal segment spans residues 27-347 (LENWLPVSYV…LDKDISCLRS (321 aa)). Residue N108 is glycosylated (N-linked (GlcNAc...) asparagine). Residues 116–121 (FAVGKY), 206–208 (DVD), and 228–231 (HPSY) each bind substrate. Residues D206 and D208 each coordinate Mn(2+). E298 functions as the Nucleophile in the catalytic mechanism.

It belongs to the glycosyltransferase 6 family. The cofactor is Mn(2+). As to expression, widely expressed. Expressed at higher level in placenta, ovary and peripheral blood leukocyte, whereas it is weakly expressed in liver, thymus, and testis. Expressed in bone marrow erythroid cells.

The protein resides in the golgi apparatus membrane. It participates in protein modification; protein glycosylation. Functionally, has lost the ability to synthesize Forssman glycolipid antigen (FORS1/FG). Might have acquired an alternative function in glycosphingolipid metabolism, but it remains to be established. It appears to have drifted more slowly than confirmed pseudogenes in the glycosyltransferase 6 family, suggesting that it has remained under evolutionary pressure. This is Globoside alpha-1,3-N-acetylgalactosaminyltransferase 1 from Homo sapiens (Human).